The following is a 617-amino-acid chain: Lipoteichoic acid synthase-like YvgJ (617 aa).

The Cytoplasmic portion of the chain corresponds to Met1–Arg10. The chain crosses the membrane as a helical span at residues Phe11–Phe31. Residues Asp32–Glu41 are Extracellular-facing. A helical transmembrane segment spans residues Leu42–Leu62. The Cytoplasmic segment spans residues Lys63–Arg68. A helical transmembrane segment spans residues Ala69 to Tyr89. At Gly90 to Lys115 the chain is on the extracellular side. Residues Glu116–Ala136 traverse the membrane as a helical segment. The Cytoplasmic segment spans residues Arg137–Arg153. A helical transmembrane segment spans residues Tyr154–Val171. Topologically, residues Gln172–Glu617 are extracellular. Mn(2+)-binding residues include Glu251 and Thr293. Thr293 is an active-site residue. His408 provides a ligand contact to substrate. Asp467 and His468 together coordinate Mn(2+).

This sequence belongs to the LTA synthase family. Post-translationally, proteolytically cleaved.

It localises to the cell membrane. It is found in the secreted. In Bacillus subtilis (strain 168), this protein is Lipoteichoic acid synthase-like YvgJ (yvgJ).